The sequence spans 233 residues: Small ribosomal subunit protein uS2 (233 aa).

Belongs to the universal ribosomal protein uS2 family.

In Clostridium perfringens (strain ATCC 13124 / DSM 756 / JCM 1290 / NCIMB 6125 / NCTC 8237 / Type A), this protein is Small ribosomal subunit protein uS2.